Reading from the N-terminus, the 301-residue chain is Phosphoribosylaminoimidazole-succinocarboxamide synthase (301 aa).

It belongs to the SAICAR synthetase family.

It catalyses the reaction 5-amino-1-(5-phospho-D-ribosyl)imidazole-4-carboxylate + L-aspartate + ATP = (2S)-2-[5-amino-1-(5-phospho-beta-D-ribosyl)imidazole-4-carboxamido]succinate + ADP + phosphate + 2 H(+). The protein operates within purine metabolism; IMP biosynthesis via de novo pathway; 5-amino-1-(5-phospho-D-ribosyl)imidazole-4-carboxamide from 5-amino-1-(5-phospho-D-ribosyl)imidazole-4-carboxylate: step 1/2. In Mycolicibacterium vanbaalenii (strain DSM 7251 / JCM 13017 / BCRC 16820 / KCTC 9966 / NRRL B-24157 / PYR-1) (Mycobacterium vanbaalenii), this protein is Phosphoribosylaminoimidazole-succinocarboxamide synthase.